The primary structure comprises 342 residues: Protein-ribulosamine 3-kinase, chloroplastic (342 aa).

The N-terminal 46 residues, 1 to 46 (MANVALLSAASPSTSSAAPRLRHVARRRPSRRSACPRSAASRLSIM), are a transit peptide targeting the chloroplast. 141-143 (EFI) contributes to the ATP binding site. Asp246 acts as the Proton acceptor in catalysis.

Belongs to the fructosamine kinase family.

It is found in the plastid. It localises to the chloroplast. It carries out the reaction N(6)-D-ribulosyl-L-lysyl-[protein] + ATP = N(6)-(3-O-phospho-D-ribulosyl)-L-lysyl-[protein] + ADP + H(+). The catalysed reaction is N(6)-(D-erythrulosyl)-L-lysyl-[protein] + ATP = N(6)-(3-O-phospho-D-erythrulosyl)-L-lysyl-[protein] + ADP + H(+). Functionally, initiates a process leading to the deglycation of proteins. Phosphorylates low-molecular-mass and protein-bound erythrulosamines and ribulosamines, but not fructosamines or psicosamines, on the third carbon of the sugar moiety. Protein-bound erythrulosamine 3-phosphates and ribulosamine 3-phosphates are unstable and decompose under physiological conditions. This Oryza sativa subsp. japonica (Rice) protein is Protein-ribulosamine 3-kinase, chloroplastic.